A 1203-amino-acid chain; its full sequence is Transmembrane channel-like protein 2 (1203 aa).

Disordered regions lie at residues Met1–Arg39 and Pro64–Lys90. Residues Phe73–Lys86 show a composition bias toward acidic residues. Residues Val191–Ala213 form a helical membrane-spanning segment. Asn225 is a glycosylation site (N-linked (GlcNAc...) asparagine). A run of 6 helical transmembrane segments spans residues Tyr276–Leu298, Phe369–Met391, Ala406–Ile428, Leu441–Leu463, Met665–Leu687, and Phe714–Ser736. Asn748 is a glycosylation site (N-linked (GlcNAc...) asparagine). Residues Ile780–Leu802 form a helical membrane-spanning segment. Disordered regions lie at residues Glu826–Pro908, Lys927–Gln1039, Ala1059–Leu1087, and Asn1112–Asp1203. Residues Asn865–Gly874 are compositionally biased toward polar residues. Over residues Asp898 to Pro908 the composition is skewed to low complexity. Over residues Lys927–Glu945 the composition is skewed to basic and acidic residues. Low complexity-rich tracts occupy residues Gln973–Ser997 and Ser1022–Ser1035. A compositionally biased stretch (polar residues) spans Val1061–Asp1076. Basic and acidic residues-rich tracts occupy residues Ser1133–Gln1147 and Pro1172–Asp1203.

It belongs to the TMC family.

It localises to the membrane. Probable ion channel. In Caenorhabditis elegans, this protein is Transmembrane channel-like protein 2 (tmc-2).